Here is a 400-residue protein sequence, read N- to C-terminus: Delta(12) fatty acid desaturase (400 aa).

A helical membrane pass occupies residues 91-111 (LAWPAYWIMQGIVCTGIWVLA). Positions 112 to 116 (HECGH) match the Histidine box-1 motif. The Histidine box-2 motif lies at 148 to 152 (HSKHH). 3 helical membrane-spanning segments follow: residues 199–219 (IVTLFWMVIQFLFGWPAYLIM), 245–265 (FFDIIISDLGVLAALGALIYA), and 277–297 (YYIIPYLFVNFWLVLITFLQH). A Histidine box-3 motif is present at residues 339–343 (HVAHH).

The protein belongs to the fatty acid desaturase type 1 family.

Its subcellular location is the membrane. The enzyme catalyses (9Z)-octadecenoyl-CoA + 2 Fe(II)-[cytochrome b5] + O2 + 2 H(+) = (9Z,12Z)-octadecadienoyl-CoA + 2 Fe(III)-[cytochrome b5] + 2 H2O. It carries out the reaction (9Z)-hexadecenoyl-CoA + 2 Fe(II)-[cytochrome b5] + O2 + 2 H(+) = (9Z,12Z)-hexadecadienoyl-CoA + 2 Fe(III)-[cytochrome b5] + 2 H2O. It participates in lipid metabolism; polyunsaturated fatty acid biosynthesis. In terms of biological role, catalyzes the desaturation of oleic acid (Delta(9)-18:1) to linoleic acid (Delta(9), Delta(12)-18:2). This is Delta(12) fatty acid desaturase from Mortierella isabellina (Filamentous fungus).